Here is a 227-residue protein sequence, read N- to C-terminus: (S)-2-haloacid dehalogenase 1 (227 aa).

Asp10 functions as the Nucleophile in the catalytic mechanism. An (S)-2-haloacid is bound by residues 11-12 (AY), Arg41, and 118-119 (SN). The interval 175 to 180 (SSNAWD) is important for catalytic activity.

It belongs to the HAD-like hydrolase superfamily. S-2-haloalkanoic acid dehalogenase family.

It catalyses the reaction an (S)-2-haloacid + H2O = a (2R)-2-hydroxycarboxylate + a halide anion + H(+). It carries out the reaction (S)-2-chloropropanoate + H2O = (R)-lactate + chloride + H(+). Functionally, catalyzes the hydrolytic dehalogenation of small (S)-2-haloalkanoic acids to yield the corresponding (R)-2-hydroxyalkanoic acids. Acts on acids of short chain lengths, C(2) to C(4), with inversion of configuration at C-2. Active with 2-halogenated carboxylic acids and converts only the S-isomer (or L-isomer) of 2-chloropropionic acid with inversion of configuration to produce R-lactate (or D-isomer). This is (S)-2-haloacid dehalogenase 1 from Pseudomonas sp. (strain CBS-3).